A 143-amino-acid polypeptide reads, in one-letter code: uncharacterized protein (143 aa).

Residues 13–143 (SLQFPHHRPG…QDAAHQCRIQ (131 aa)) are disordered. Residues 17 to 31 (PHHRPGLRRHRKNTT) show a composition bias toward basic residues. Basic and acidic residues-rich tracts occupy residues 35–48 (AAVD…RGDA), 84–96 (DGRE…AEEK), and 112–133 (EKQH…DHAG). The segment covering 134 to 143 (QDAAHQCRIQ) has biased composition (low complexity).

This is an uncharacterized protein from Homo sapiens (Human).